The sequence spans 222 residues: Large ribosomal subunit protein uL4 (222 aa).

It belongs to the universal ribosomal protein uL4 family. Part of the 50S ribosomal subunit.

Functionally, one of the primary rRNA binding proteins, this protein initially binds near the 5'-end of the 23S rRNA. It is important during the early stages of 50S assembly. It makes multiple contacts with different domains of the 23S rRNA in the assembled 50S subunit and ribosome. Forms part of the polypeptide exit tunnel. The polypeptide is Large ribosomal subunit protein uL4 (Acidobacterium capsulatum (strain ATCC 51196 / DSM 11244 / BCRC 80197 / JCM 7670 / NBRC 15755 / NCIMB 13165 / 161)).